The chain runs to 129 residues: Small ribosomal subunit protein uS9 (129 aa).

The protein belongs to the universal ribosomal protein uS9 family.

This Pelodictyon phaeoclathratiforme (strain DSM 5477 / BU-1) protein is Small ribosomal subunit protein uS9.